The sequence spans 221 residues: PKHD-type hydroxylase Pro_1271 (221 aa).

The region spanning 80–174 (KVHGVMFSKS…RIVCVGWIQS (95 aa)) is the Fe2OG dioxygenase domain. H98, D100, and H155 together coordinate Fe cation. R165 is a binding site for 2-oxoglutarate.

The cofactor is Fe(2+). L-ascorbate serves as cofactor.

The polypeptide is PKHD-type hydroxylase Pro_1271 (Prochlorococcus marinus (strain SARG / CCMP1375 / SS120)).